The sequence spans 194 residues: Probable RNA 2'-phosphotransferase (194 aa).

This sequence belongs to the KptA/TPT1 family.

In terms of biological role, removes the 2'-phosphate from RNA via an intermediate in which the phosphate is ADP-ribosylated by NAD followed by a presumed transesterification to release the RNA and generate ADP-ribose 1''-2''-cyclic phosphate (APPR&gt;P). May function as an ADP-ribosylase. This is Probable RNA 2'-phosphotransferase from Burkholderia lata (strain ATCC 17760 / DSM 23089 / LMG 22485 / NCIMB 9086 / R18194 / 383).